Consider the following 404-residue polypeptide: Probable tRNA sulfurtransferase (404 aa).

The THUMP domain occupies 60-165 (TAVAESLKQV…EEAAYLSYET (106 aa)). ATP-binding positions include 183–184 (ML), 208–209 (HF), Arg-265, Gly-287, and Gln-296.

It belongs to the ThiI family.

The protein resides in the cytoplasm. It carries out the reaction [ThiI sulfur-carrier protein]-S-sulfanyl-L-cysteine + a uridine in tRNA + 2 reduced [2Fe-2S]-[ferredoxin] + ATP + H(+) = [ThiI sulfur-carrier protein]-L-cysteine + a 4-thiouridine in tRNA + 2 oxidized [2Fe-2S]-[ferredoxin] + AMP + diphosphate. The catalysed reaction is [ThiS sulfur-carrier protein]-C-terminal Gly-Gly-AMP + S-sulfanyl-L-cysteinyl-[cysteine desulfurase] + AH2 = [ThiS sulfur-carrier protein]-C-terminal-Gly-aminoethanethioate + L-cysteinyl-[cysteine desulfurase] + A + AMP + 2 H(+). It functions in the pathway cofactor biosynthesis; thiamine diphosphate biosynthesis. Functionally, catalyzes the ATP-dependent transfer of a sulfur to tRNA to produce 4-thiouridine in position 8 of tRNAs, which functions as a near-UV photosensor. Also catalyzes the transfer of sulfur to the sulfur carrier protein ThiS, forming ThiS-thiocarboxylate. This is a step in the synthesis of thiazole, in the thiamine biosynthesis pathway. The sulfur is donated as persulfide by IscS. The sequence is that of Probable tRNA sulfurtransferase from Streptococcus pneumoniae (strain ATCC 700669 / Spain 23F-1).